A 91-amino-acid polypeptide reads, in one-letter code: Small ribosomal subunit protein bS20 (91 aa).

Residues 1-18 (MPLHKSAEKRLRQSERRN) show a composition bias toward basic and acidic residues. Positions 1–25 (MPLHKSAEKRLRQSERRNARNRARK) are disordered.

The protein belongs to the bacterial ribosomal protein bS20 family.

Its function is as follows. Binds directly to 16S ribosomal RNA. The chain is Small ribosomal subunit protein bS20 from Chlorobium luteolum (strain DSM 273 / BCRC 81028 / 2530) (Pelodictyon luteolum).